The sequence spans 575 residues: Arginine--tRNA ligase (575 aa).

The short motif at 122-132 (PNVAKEMHVGH) is the 'HIGH' region element.

The protein belongs to the class-I aminoacyl-tRNA synthetase family. As to quaternary structure, monomer.

It localises to the cytoplasm. It catalyses the reaction tRNA(Arg) + L-arginine + ATP = L-arginyl-tRNA(Arg) + AMP + diphosphate. The chain is Arginine--tRNA ligase from Actinobacillus succinogenes (strain ATCC 55618 / DSM 22257 / CCUG 43843 / 130Z).